Consider the following 541-residue polypeptide: Chaperonin GroEL (541 aa).

ATP contacts are provided by residues 30–33 (TLGP), Lys-51, 87–91 (DGTTT), Gly-415, and Asp-495.

The protein belongs to the chaperonin (HSP60) family. In terms of assembly, forms a cylinder of 14 subunits composed of two heptameric rings stacked back-to-back. Interacts with the co-chaperonin GroES.

It localises to the cytoplasm. The enzyme catalyses ATP + H2O + a folded polypeptide = ADP + phosphate + an unfolded polypeptide.. In terms of biological role, together with its co-chaperonin GroES, plays an essential role in assisting protein folding. The GroEL-GroES system forms a nano-cage that allows encapsulation of the non-native substrate proteins and provides a physical environment optimized to promote and accelerate protein folding. This Pantoea ananas (Erwinia uredovora) protein is Chaperonin GroEL.